The following is a 229-amino-acid chain: MDYVSDDFAPSNILSCNDDSGDHPRNLIPELCRQFYANGWVTGTGGGISIKYNDQIFIAPSGVQKERIQPDDLFVQNLNGEDVIIPKPEKKLSKSQCTPIFMCSFTERNAGAVIHVHSQEVVKLCLLNPENEVKITGLEMIKGIYNEKKGKFYDNDEELIIPIIENSKYEKDLVDTFKIALKKYPSTSAVLVRNHGMYVWGSNWKTPKTQLEGYEYLFKIAIFKKIPPV.

Substrate is bound at residue C97. Zn(2+) contacts are provided by H115 and H117. The Proton donor/acceptor role is filled by E139. H195 provides a ligand contact to Zn(2+).

Belongs to the aldolase class II family. MtnB subfamily. The cofactor is Zn(2+).

It is found in the cytoplasm. The enzyme catalyses 5-(methylsulfanyl)-D-ribulose 1-phosphate = 5-methylsulfanyl-2,3-dioxopentyl phosphate + H2O. The protein operates within amino-acid biosynthesis; L-methionine biosynthesis via salvage pathway; L-methionine from S-methyl-5-thio-alpha-D-ribose 1-phosphate: step 2/6. Catalyzes the dehydration of methylthioribulose-1-phosphate (MTRu-1-P) into 2,3-diketo-5-methylthiopentyl-1-phosphate (DK-MTP-1-P). This is Probable methylthioribulose-1-phosphate dehydratase from Acyrthosiphon pisum (Pea aphid).